The primary structure comprises 411 residues: Peptidase T (411 aa).

Residue His79 coordinates Zn(2+). The active site involves Asp81. Asp142 contributes to the Zn(2+) binding site. Glu176 (proton acceptor) is an active-site residue. Residues Glu177, Asp199, and His381 each contribute to the Zn(2+) site.

It belongs to the peptidase M20B family. Zn(2+) serves as cofactor.

Its subcellular location is the cytoplasm. The catalysed reaction is Release of the N-terminal residue from a tripeptide.. Its function is as follows. Cleaves the N-terminal amino acid of tripeptides. This is Peptidase T from Geobacillus kaustophilus (strain HTA426).